The chain runs to 384 residues: Actin-related protein 2/3 complex subunit 1 (384 aa).

WD repeat units lie at residues 61-99, 105-146, 151-190, 212-251, and 349-383; these read DHDK…TYKP, RINR…WVSK, PIKS…LDSK, YQGS…QSVN, and AHEN…VIYT.

It belongs to the WD repeat ARPC1 family. Component of the Arp2/3 complex composed of ARP2, ARP3, ARC40/p41-ARC, ARC35/p34-ARC, ARC18/p21-ARC, ARC19/p20-ARC and ARC16/p16-ARC.

The protein localises to the cytoplasm. It is found in the cytoskeleton. It localises to the actin patch. Functions as a component of the Arp2/3 complex which is involved in regulation of actin polymerization and together with an activating nucleation-promoting factor (NPF) mediates the formation of branched actin networks. The chain is Actin-related protein 2/3 complex subunit 1 (ARC40) from Saccharomyces cerevisiae (strain ATCC 204508 / S288c) (Baker's yeast).